The chain runs to 249 residues: Isoprenyl transferase (249 aa).

Residue aspartate 25 is part of the active site. Mg(2+) is bound at residue aspartate 25. Substrate contacts are provided by residues 26–29, tryptophan 30, arginine 38, histidine 42, and 70–72; these read GNGR and STE. Asparagine 73 functions as the Proton acceptor in the catalytic mechanism. Residues tryptophan 74, arginine 76, arginine 197, and 203–205 contribute to the substrate site; that span reads RLS. A Mg(2+)-binding site is contributed by glutamate 216.

This sequence belongs to the UPP synthase family. Homodimer. Mg(2+) serves as cofactor.

In terms of biological role, catalyzes the condensation of isopentenyl diphosphate (IPP) with allylic pyrophosphates generating different type of terpenoids. This chain is Isoprenyl transferase, found in Streptococcus mutans serotype c (strain ATCC 700610 / UA159).